Reading from the N-terminus, the 176-residue chain is Imidazoleglycerol-phosphate dehydratase (176 aa).

The protein belongs to the imidazoleglycerol-phosphate dehydratase family.

It is found in the cytoplasm. The catalysed reaction is D-erythro-1-(imidazol-4-yl)glycerol 3-phosphate = 3-(imidazol-4-yl)-2-oxopropyl phosphate + H2O. It functions in the pathway amino-acid biosynthesis; L-histidine biosynthesis; L-histidine from 5-phospho-alpha-D-ribose 1-diphosphate: step 6/9. This Pyrococcus furiosus (strain ATCC 43587 / DSM 3638 / JCM 8422 / Vc1) protein is Imidazoleglycerol-phosphate dehydratase.